A 256-amino-acid chain; its full sequence is Thiazole synthase (256 aa).

K96 serves as the catalytic Schiff-base intermediate with DXP. 1-deoxy-D-xylulose 5-phosphate is bound by residues G157, 184-185 (AG), and 206-207 (NT).

Belongs to the ThiG family. In terms of assembly, homotetramer. Forms heterodimers with either ThiH or ThiS.

The protein localises to the cytoplasm. The enzyme catalyses [ThiS sulfur-carrier protein]-C-terminal-Gly-aminoethanethioate + 2-iminoacetate + 1-deoxy-D-xylulose 5-phosphate = [ThiS sulfur-carrier protein]-C-terminal Gly-Gly + 2-[(2R,5Z)-2-carboxy-4-methylthiazol-5(2H)-ylidene]ethyl phosphate + 2 H2O + H(+). It functions in the pathway cofactor biosynthesis; thiamine diphosphate biosynthesis. Functionally, catalyzes the rearrangement of 1-deoxy-D-xylulose 5-phosphate (DXP) to produce the thiazole phosphate moiety of thiamine. Sulfur is provided by the thiocarboxylate moiety of the carrier protein ThiS. In vitro, sulfur can be provided by H(2)S. This chain is Thiazole synthase, found in Bartonella tribocorum (strain CIP 105476 / IBS 506).